The sequence spans 94 residues: Pyrimidine/purine nucleoside phosphorylase (94 aa).

It belongs to the nucleoside phosphorylase PpnP family.

The catalysed reaction is a purine D-ribonucleoside + phosphate = a purine nucleobase + alpha-D-ribose 1-phosphate. The enzyme catalyses adenosine + phosphate = alpha-D-ribose 1-phosphate + adenine. It carries out the reaction cytidine + phosphate = cytosine + alpha-D-ribose 1-phosphate. It catalyses the reaction guanosine + phosphate = alpha-D-ribose 1-phosphate + guanine. The catalysed reaction is inosine + phosphate = alpha-D-ribose 1-phosphate + hypoxanthine. The enzyme catalyses thymidine + phosphate = 2-deoxy-alpha-D-ribose 1-phosphate + thymine. It carries out the reaction uridine + phosphate = alpha-D-ribose 1-phosphate + uracil. It catalyses the reaction xanthosine + phosphate = alpha-D-ribose 1-phosphate + xanthine. In terms of biological role, catalyzes the phosphorolysis of diverse nucleosides, yielding D-ribose 1-phosphate and the respective free bases. Can use uridine, adenosine, guanosine, cytidine, thymidine, inosine and xanthosine as substrates. Also catalyzes the reverse reactions. This chain is Pyrimidine/purine nucleoside phosphorylase, found in Alcanivorax borkumensis (strain ATCC 700651 / DSM 11573 / NCIMB 13689 / SK2).